We begin with the raw amino-acid sequence, 332 residues long: Spherulin-4 (332 aa).

Positions 1–22 (MNIKIVVLVIFAILLGSALAWH) are cleaved as a signal peptide. The disordered stretch occupies residues 26-60 (HHNPTKAPTEAPHRGGGGGGGHNTPAPTQPPRQNT).

The chain is Spherulin-4 from Physarum polycephalum (Slime mold).